The chain runs to 261 residues: Pyridoxine 5'-phosphate synthase (261 aa).

3-amino-2-oxopropyl phosphate is bound at residue N6. 8–9 (DH) is a 1-deoxy-D-xylulose 5-phosphate binding site. R17 is a 3-amino-2-oxopropyl phosphate binding site. H42 acts as the Proton acceptor in catalysis. R44 and H49 together coordinate 1-deoxy-D-xylulose 5-phosphate. E69 functions as the Proton acceptor in the catalytic mechanism. T99 is a binding site for 1-deoxy-D-xylulose 5-phosphate. The active-site Proton donor is the H213. Residues G214 and 235-236 (GQ) contribute to the 3-amino-2-oxopropyl phosphate site.

It belongs to the PNP synthase family. Homooctamer; tetramer of dimers.

The protein resides in the cytoplasm. The enzyme catalyses 3-amino-2-oxopropyl phosphate + 1-deoxy-D-xylulose 5-phosphate = pyridoxine 5'-phosphate + phosphate + 2 H2O + H(+). It functions in the pathway cofactor biosynthesis; pyridoxine 5'-phosphate biosynthesis; pyridoxine 5'-phosphate from D-erythrose 4-phosphate: step 5/5. Functionally, catalyzes the complicated ring closure reaction between the two acyclic compounds 1-deoxy-D-xylulose-5-phosphate (DXP) and 3-amino-2-oxopropyl phosphate (1-amino-acetone-3-phosphate or AAP) to form pyridoxine 5'-phosphate (PNP) and inorganic phosphate. The protein is Pyridoxine 5'-phosphate synthase of Aliarcobacter butzleri (strain RM4018) (Arcobacter butzleri).